The following is a 372-amino-acid chain: Spermidine/putrescine import ATP-binding protein PotA (372 aa).

The 239-residue stretch at 12–250 (VSIRSVRKVY…PRNRFVADFI (239 aa)) folds into the ABC transporter domain. 48–55 (GPSGCGKT) is a binding site for ATP.

It belongs to the ABC transporter superfamily. Spermidine/putrescine importer (TC 3.A.1.11.1) family. As to quaternary structure, the complex is composed of two ATP-binding proteins (PotA), two transmembrane proteins (PotB and PotC) and a solute-binding protein (PotD).

The protein localises to the cell inner membrane. It catalyses the reaction ATP + H2O + polyamine-[polyamine-binding protein]Side 1 = ADP + phosphate + polyamineSide 2 + [polyamine-binding protein]Side 1.. Part of the ABC transporter complex PotABCD involved in spermidine/putrescine import. Responsible for energy coupling to the transport system. This Pseudomonas fluorescens (strain ATCC BAA-477 / NRRL B-23932 / Pf-5) protein is Spermidine/putrescine import ATP-binding protein PotA.